We begin with the raw amino-acid sequence, 310 residues long: Methionyl-tRNA formyltransferase (310 aa).

109–112 (SLLP) is a binding site for (6S)-5,6,7,8-tetrahydrofolate.

Belongs to the Fmt family.

It carries out the reaction L-methionyl-tRNA(fMet) + (6R)-10-formyltetrahydrofolate = N-formyl-L-methionyl-tRNA(fMet) + (6S)-5,6,7,8-tetrahydrofolate + H(+). Attaches a formyl group to the free amino group of methionyl-tRNA(fMet). The formyl group appears to play a dual role in the initiator identity of N-formylmethionyl-tRNA by promoting its recognition by IF2 and preventing the misappropriation of this tRNA by the elongation apparatus. The polypeptide is Methionyl-tRNA formyltransferase (Pseudomonas putida (strain ATCC 47054 / DSM 6125 / CFBP 8728 / NCIMB 11950 / KT2440)).